The following is a 139-amino-acid chain: Small ribosomal subunit protein uS12 (139 aa).

Residues 1-21 form a disordered region; the sequence is MSTVSQLIKKRRSSKTSKTKA. Residues 8–18 show a composition bias toward basic residues; the sequence is IKKRRSSKTSK.

Belongs to the universal ribosomal protein uS12 family. As to quaternary structure, part of the 30S ribosomal subunit. Contacts proteins S8 and S17. May interact with IF1 in the 30S initiation complex.

In terms of biological role, with S4 and S5 plays an important role in translational accuracy. Functionally, interacts with and stabilizes bases of the 16S rRNA that are involved in tRNA selection in the A site and with the mRNA backbone. Located at the interface of the 30S and 50S subunits, it traverses the body of the 30S subunit contacting proteins on the other side and probably holding the rRNA structure together. The combined cluster of proteins S8, S12 and S17 appears to hold together the shoulder and platform of the 30S subunit. This Onion yellows phytoplasma (strain OY-M) protein is Small ribosomal subunit protein uS12.